The following is a 22-amino-acid chain: Fuctinin-2 (22 aa).

The interval 1–22 (ELPGLPKGEKEQQEAIEHIDEV) is disordered. The segment covering 7 to 22 (KGEKEQQEAIEHIDEV) has biased composition (basic and acidic residues).

The protein to human SET/PHAPII protein. As to quaternary structure, oligomer.

Its subcellular location is the cytoplasm. Its function is as follows. Has a role in the physiological regulation of fucosylation processes. The polypeptide is Fuctinin-2 (Rattus norvegicus (Rat)).